We begin with the raw amino-acid sequence, 851 residues long: MEPGRNQLLVAILLTSACLIYCKQYVTVFYGIPAWRNASIPLFCATKNRDTWGTIQCLPDNDDYQEITLNVTEAFDAWDNTVTEQAIEDVWRLFETSIKPCVKLTPLCVAMNCNITSGTTATPSPPNITIIDENSTCIGDNNCTGLGKEEVVECEFNMTGLEQDKKRKYNDAWYSRDVVCDKTNGTGTCYMRHCNTSVIKESCDKHYWDAMKFRYCAPPGFALLRCNDTNYSGFEPKCSKVVAASCTRMMETQTSTWFGFNGTRAENRTYIYWHGKDNRTIISLNKYYNLTMHCKRPGNKTVVPITLMSGRRFHSRPVYNKKPGQAWCWFQGNWIEAMREVKQTLAKHPRYGGTNDTGKINFTKPGIGSDPEVTYMWTNCRGEFLYCNMTWFLNWVENKTNQTHGNYAPCHIRQIINTWHKVGTNVYLPPREGELTCNSTVTSIIANIDSDGNQTNITFSAEVAELYRLELGDYKLIEVTPIPFAPTKEKRYSSAPVRNKRGVFVLGFLGFLATAGSAMGGASLTLSAQSRTLLAGIVQQQQQLLDVVKRQQEMLRLTVWGTKNLQARVTAIEKYLKDQAQLNSWGCAFRQVCHTTVPWVNDSLTPDWNNMTWQEWEKRVHYLEANISQSLEQAQIQQEKNMYELQKLNSWDVFGNWFDLTSWIKYIQYGVYIVVGIIGLRIAIYIVQLLSRLRKGYRPVFSSPPGYLQQIHIHTDRGQPANEETEEDAGDDSGFGLWPWPLNYIQFLIHLLTRLLTGLYNSCRGLLSKNSPTRRLISQSLTAIRDWLRLKAAYLQYGCEWIQEAFRAFARTARETIAGAWRGLCEAAQRIGRGILAVPRRIRQGAEIALL.

A signal peptide spans 1–24 (MEPGRNQLLVAILLTSACLIYCKQ). The Extracellular portion of the chain corresponds to 25–669 (YVTVFYGIPA…LTSWIKYIQY (645 aa)). N-linked (GlcNAc...) asparagine; by host glycosylation is present at Asn-37. Cysteines 44 and 57 form a disulfide. N-linked (GlcNAc...) asparagine; by host glycosylation is found at Asn-70, Asn-114, Asn-127, Asn-134, Asn-142, Asn-157, Asn-184, Asn-195, Asn-227, Asn-230, Asn-261, Asn-267, Asn-278, Asn-289, Asn-299, Asn-355, Asn-361, Asn-388, Asn-398, Asn-401, Asn-438, Asn-453, and Asn-456. Intrachain disulfides connect Cys-101–Cys-203, Cys-108–Cys-194, Cys-113–Cys-154, Cys-216–Cys-246, and Cys-226–Cys-238. The segment at 113–153 (CNITSGTTATPSPPNITIIDENSTCIGDNNCTGLGKEEVVE) is V1. A V2 region spans residues 154–194 (CEFNMTGLEQDKKRKYNDAWYSRDVVCDKTNGTGTCYMRHC). Positions 294-327 (CKRPGNKTVVPITLMSGRRFHSRPVYNKKPGQAW) are V3. A disulfide bond links Cys-294 and Cys-328. 2 cysteine pairs are disulfide-bonded: Cys-380–Cys-437 and Cys-387–Cys-410. Residues 387–410 (CNMTWFLNWVENKTNQTHGNYAPC) are V4. The V5 stretch occupies residues 453–459 (NQTNITF). The interval 502 to 522 (GVFVLGFLGFLATAGSAMGGA) is fusion peptide. The segment at 565–581 (LQARVTAIEKYLKDQAQ) is immunosuppression. N-linked (GlcNAc...) asparagine; by host glycosylation is found at Asn-601, Asn-610, and Asn-626. Residues 647–668 (KLNSWDVFGNWFDLTSWIKYIQ) are MPER; binding to GalCer. A helical membrane pass occupies residues 670 to 690 (GVYIVVGIIGLRIAIYIVQLL). Residues 691–851 (SRLRKGYRPV…IRQGAEIALL (161 aa)) are Cytoplasmic-facing. Residues 697–700 (YRPV) carry the YXXV motif; contains endocytosis signal motif. Cys-763 carries S-palmitoyl cysteine; by host lipidation. The Di-leucine internalization motif signature appears at 850-851 (LL).

As to quaternary structure, the mature envelope protein (Env) consists of a homotrimer of non-covalently associated gp120-gp41 heterodimers. The resulting complex protrudes from the virus surface as a spike. There seems to be as few as 10 spikes on the average virion. Interacts with human CD4, CCR5 and CXCR4, to form a P4HB/PDI-CD4-CXCR4-gp120 complex. Gp120 also interacts with the C-type lectins CD209/DC-SIGN and CLEC4M/DC-SIGNR (collectively referred to as DC-SIGN(R)). Gp120 and gp41 interact with GalCer. In terms of assembly, the mature envelope protein (Env) consists of a homotrimer of non-covalently associated gp120-gp41 heterodimers. The resulting complex protrudes from the virus surface as a spike. There seems to be as few as 10 spikes on the average virion. In terms of processing, specific enzymatic cleavages in vivo yield mature proteins. Envelope glycoproteins are synthesized as an inactive precursor that is heavily N-glycosylated and processed likely by host cell furin in the Golgi to yield the mature SU and TM proteins. The cleavage site between SU and TM requires the minimal sequence [KR]-X-[KR]-R. Palmitoylation of the transmembrane protein and of Env polyprotein (prior to its proteolytic cleavage) is essential for their association with host cell membrane lipid rafts. Palmitoylation is therefore required for envelope trafficking to classical lipid rafts, but not for viral replication.

The protein resides in the virion membrane. Its subcellular location is the host cell membrane. The protein localises to the host endosome membrane. In terms of biological role, the surface protein gp120 (SU) attaches the virus to the host lymphoid cell by binding to the primary receptor CD4. This interaction induces a structural rearrangement creating a high affinity binding site for a chemokine coreceptor like CXCR4 and/or CCR5. This peculiar 2 stage receptor-interaction strategy allows gp120 to maintain the highly conserved coreceptor-binding site in a cryptic conformation, protected from neutralizing antibodies. Since CD4 also displays a binding site for the disulfide-isomerase P4HB/PDI, a P4HB/PDI-CD4-CXCR4-gp120 complex may form. In that complex, P4HB/PDI could reach and reduce gp120 disulfide bonds, causing major conformational changes in gp120. TXN, another PDI family member could also be involved in disulfide rearrangements in Env during fusion. These changes are transmitted to the transmembrane protein gp41 and are thought to activate its fusogenic potential by unmasking its fusion peptide. Its function is as follows. The surface protein gp120 is a ligand for CD209/DC-SIGN and CLEC4M/DC-SIGNR, which are respectively found on dendritic cells (DCs), and on endothelial cells of liver sinusoids and lymph node sinuses. These interactions allow capture of viral particles at mucosal surfaces by these cells and subsequent transmission to permissive cells. DCs are professional antigen presenting cells, critical for host immunity by inducing specific immune responses against a broad variety of pathogens. They act as sentinels in various tissues where they take up antigen, process it, and present it to T-cells following migration to lymphoid organs. HIV subverts the migration properties of dendritic cells to gain access to CD4+ T-cells in lymph nodes. Virus transmission to permissive T-cells occurs either in trans (without DCs infection, through viral capture and transmission), or in cis (following DCs productive infection, through the usual CD4-gp120 interaction), thereby inducing a robust infection. In trans infection, bound virions remain infectious over days and it is proposed that they are not degraded, but protected in non-lysosomal acidic organelles within the DCs close to the cell membrane thus contributing to the viral infectious potential during DCs' migration from the periphery to the lymphoid tissues. On arrival at lymphoid tissues, intact virions recycle back to DCs' cell surface allowing virus transmission to CD4+ T-cells. Virion capture also seems to lead to MHC-II-restricted viral antigen presentation, and probably to the activation of HIV-specific CD4+ cells. Functionally, the transmembrane protein gp41 (TM) acts as a class I viral fusion protein. Under the current model, the protein has at least 3 conformational states: pre-fusion native state, pre-hairpin intermediate state, and post-fusion hairpin state. During fusion of viral and target intracellular membranes, the coiled coil regions (heptad repeats) assume a trimer-of-hairpins structure, positioning the fusion peptide in close proximity to the C-terminal region of the ectodomain. The formation of this structure appears to drive apposition and subsequent fusion of viral and target cell membranes. Complete fusion occurs in host cell endosomes and is dynamin-dependent, however some lipid transfer might occur at the plasma membrane. The virus undergoes clathrin-dependent internalization long before endosomal fusion, thus minimizing the surface exposure of conserved viral epitopes during fusion and reducing the efficacy of inhibitors targeting these epitopes. Membranes fusion leads to delivery of the nucleocapsid into the cytoplasm. The envelope glycoprotein gp160 precursor down-modulates cell surface CD4 antigen by interacting with it in the endoplasmic reticulum and blocking its transport to the cell surface. In terms of biological role, the gp120-gp41 heterodimer seems to contribute to T-cell depletion during HIV-1 infection. The envelope glycoproteins expressed on the surface of infected cells induce apoptosis through an interaction with uninfected cells expressing the receptor (CD4) and the coreceptors CXCR4 or CCR5. This type of bystander killing may be obtained by at least three distinct mechanisms. First, the interaction between the 2 cells can induce cellular fusion followed by nuclear fusion within the syncytium. Syncytia are condemned to die from apoptosis. Second, the 2 interacting cells may not fuse entirely and simply exchange plasma membrane lipids, after a sort of hemifusion process, followed by rapid death. Third, it is possible that virus-infected cells, on the point of undergoing apoptosis, fuse with CD4-expressing cells, in which case apoptosis is rapidly transmitted from one cell to the other and thus occurs in a sort of contagious fashion. Its function is as follows. The gp120-gp41 heterodimer allows rapid transcytosis of the virus through CD4 negative cells such as simple epithelial monolayers of the intestinal, rectal and endocervical epithelial barriers. Both gp120 and gp41 specifically recognize glycosphingolipids galactosyl-ceramide (GalCer) or 3' sulfo-galactosyl-ceramide (GalS) present in the lipid rafts structures of epithelial cells. Binding to these alternative receptors allows the rapid transcytosis of the virus through the epithelial cells. This transcytotic vesicle-mediated transport of virions from the apical side to the basolateral side of the epithelial cells does not involve infection of the cells themselves. This is Envelope glycoprotein gp160 (env) from Human immunodeficiency virus type 2 subtype A (isolate D194) (HIV-2).